The sequence spans 259 residues: HTH-type transcriptional regulator TtgV (259 aa).

An HTH iclR-type domain is found at 14–76; that stretch reads IQVIARAASI…GPAGGFRLGP (63 aa). The H-T-H motif DNA-binding region spans 36–59; that stretch reads LAAIAQLVGLPRSTVQRIINALEE. The 165-residue stretch at 89–253 folds into the IclR-ED domain; it reads ILSLVKPYLR…KLNIERAIGR (165 aa).

Its function is as follows. Represses the expression of the ttgGHI and ttgVW operons. Binds to the ttgGHI / ttgVW intergenic region, probably preventing binding of RNA polymerase; ttgV dissociates from this region in the presence of 1-hexanol. The polypeptide is HTH-type transcriptional regulator TtgV (ttgV) (Pseudomonas putida (strain DOT-T1E)).